The primary structure comprises 100 residues: Pancreatic polypeptide prohormone (100 aa).

Residues 1-29 form the signal peptide; that stretch reads MAVAYCCLSLFLVSTWVALLLQPLQGTWG. A Tyrosine amide modification is found at Tyr65.

Belongs to the NPY family. Post-translationally, no icosapeptide-like peptide is cleaved from the C-terminal.

It is found in the secreted. Its function is as follows. Hormone secreted by pancreatic cells that acts as a regulator of pancreatic and gastrointestinal functions probably by signaling through the G protein-coupled receptor NPY4R2. The protein is Pancreatic polypeptide prohormone (Ppy) of Mus musculus (Mouse).